Consider the following 71-residue polypeptide: Small ribosomal subunit protein bS18c (71 aa).

The protein belongs to the bacterial ribosomal protein bS18 family. Part of the 30S ribosomal subunit.

The protein localises to the plastid. The protein resides in the chloroplast. In Mesostigma viride (Green alga), this protein is Small ribosomal subunit protein bS18c (rps18).